Reading from the N-terminus, the 622-residue chain is Membrane protein insertase YidC (622 aa).

The chain crosses the membrane as a helical span at residues 8-28; the sequence is LFLALILSMGIWMGVNYFFFP. Positions 33 to 61 are enriched in basic and acidic residues; sequence KTSETKEVKVDKPSDDKQDQIQKEKKESR. The interval 33–70 is disordered; the sequence is KTSETKEVKVDKPSDDKQDQIQKEKKESRTTIPSKGTK. 4 helical membrane passes run 413–433, 484–504, 532–552, and 571–591; these read FTIP…KLVF, VGGC…YTAF, AIPY…LMVG, and MLMY…PSGV.

This sequence belongs to the OXA1/ALB3/YidC family. Type 1 subfamily. In terms of assembly, interacts with the Sec translocase complex via SecD. Specifically interacts with transmembrane segments of nascent integral membrane proteins during membrane integration.

The protein resides in the cell inner membrane. Required for the insertion and/or proper folding and/or complex formation of integral membrane proteins into the membrane. Involved in integration of membrane proteins that insert both dependently and independently of the Sec translocase complex, as well as at least some lipoproteins. Aids folding of multispanning membrane proteins. The sequence is that of Membrane protein insertase YidC from Leptospira borgpetersenii serovar Hardjo-bovis (strain JB197).